The primary structure comprises 472 residues: Diaminopimelate decarboxylase (472 aa).

Residues 1–23 (MNVHTAGPRHAEKTRHTATPQRV) are disordered. Lys97 carries the post-translational modification N6-(pyridoxal phosphate)lysine. Residues Gly283 and 325–328 (EPGR) contribute to the pyridoxal 5'-phosphate site. Residues Arg328, Arg369, and Tyr373 each contribute to the substrate site. The Proton donor role is filled by Cys400. Glu401 and Tyr430 together coordinate substrate. A pyridoxal 5'-phosphate-binding site is contributed by Tyr430.

It belongs to the Orn/Lys/Arg decarboxylase class-II family. LysA subfamily. Homodimer. Pyridoxal 5'-phosphate is required as a cofactor.

It carries out the reaction meso-2,6-diaminopimelate + H(+) = L-lysine + CO2. The protein operates within amino-acid biosynthesis; L-lysine biosynthesis via DAP pathway; L-lysine from DL-2,6-diaminopimelate: step 1/1. Its function is as follows. Specifically catalyzes the decarboxylation of meso-diaminopimelate (meso-DAP) to L-lysine. This chain is Diaminopimelate decarboxylase, found in Mycobacterium leprae (strain TN).